Consider the following 429-residue polypeptide: DNA dC-&gt;dU-editing enzyme APOBEC3 (429 aa).

CMP/dCMP-type deaminase domains lie at 38–154 (DRKD…AQVA) and 238–357 (EEEF…LCSL). A Zn(2+)-binding site is contributed by His71. Glu73 acts as the Proton donor in catalysis. Positions 105, 108, 288, 316, and 319 each coordinate Zn(2+).

This sequence belongs to the cytidine and deoxycytidylate deaminase family. In terms of assembly, homodimer. It depends on Zn(2+) as a cofactor.

It is found in the cytoplasm. The catalysed reaction is a 2'-deoxycytidine in single-stranded DNA + H2O + H(+) = a 2'-deoxyuridine in single-stranded DNA + NH4(+). Its function is as follows. DNA deaminase (cytidine deaminase) which acts as an inhibitor of retrovirus replication and retrotransposon mobility via deaminase-dependent and -independent mechanisms. Selectively targets single-stranded DNA and does not deaminate double-stranded DNA or single- or double-stranded RNA. This chain is DNA dC-&gt;dU-editing enzyme APOBEC3 (Apobec3), found in Rattus norvegicus (Rat).